Here is a 148-residue protein sequence, read N- to C-terminus: Single-stranded DNA-binding protein, mitochondrial (148 aa).

A mitochondrion-targeting transit peptide spans 1–16 (MFRRPALQVLRQFVRH). The 112-residue stretch at 30-141 (LNRVQLLGRV…IIADNIVFLS (112 aa)) folds into the SSB domain. 2 positions are modified to phosphoserine: serine 67 and serine 79. Lysine 113 is modified (N6-acetyllysine). N6-succinyllysine is present on lysine 122.

In terms of assembly, homotetramer. Interacts with MPG/AAG, through inhibition of its glycosylase activity it potentially prevents formation of DNA breaks in ssDNA, ensuring that base removal primarily occurs in dsDNA. Interacts with POLDIP2. Interacts with PRIMPOL.

The protein resides in the mitochondrion. Its subcellular location is the mitochondrion matrix. It is found in the mitochondrion nucleoid. Functionally, binds preferentially and cooperatively to pyrimidine rich single-stranded DNA (ss-DNA). In vitro, required to maintain the copy number of mitochondrial DNA (mtDNA) and plays a crucial role during mtDNA replication by stimulating the activity of the replisome components POLG and TWNK at the replication fork. Promotes the activity of the gamma complex polymerase POLG, largely by organizing the template DNA and eliminating secondary structures to favor ss-DNA conformations that facilitate POLG activity. In addition it is able to promote the 5'-3' unwinding activity of the mtDNA helicase TWNK. May also function in mtDNA repair. The chain is Single-stranded DNA-binding protein, mitochondrial (SSBP1) from Oryctolagus cuniculus (Rabbit).